Here is a 358-residue protein sequence, read N- to C-terminus: Alanine racemase (358 aa).

The Proton acceptor; specific for D-alanine role is filled by lysine 34. Lysine 34 is subject to N6-(pyridoxal phosphate)lysine. Residue arginine 129 participates in substrate binding. The Proton acceptor; specific for L-alanine role is filled by tyrosine 254. Methionine 302 provides a ligand contact to substrate.

The protein belongs to the alanine racemase family. It depends on pyridoxal 5'-phosphate as a cofactor.

It carries out the reaction L-alanine = D-alanine. Its pathway is amino-acid biosynthesis; D-alanine biosynthesis; D-alanine from L-alanine: step 1/1. Functionally, catalyzes the interconversion of L-alanine and D-alanine. May also act on other amino acids. The polypeptide is Alanine racemase (alr) (Aliivibrio salmonicida (strain LFI1238) (Vibrio salmonicida (strain LFI1238))).